We begin with the raw amino-acid sequence, 344 residues long: Anthranilate phosphoribosyltransferase (344 aa).

Residues glycine 80, 83-84 (GD), threonine 88, 90-93 (NIST), 108-116 (KHGNRSISS), and serine 120 each bind 5-phospho-alpha-D-ribose 1-diphosphate. Glycine 80 contacts anthranilate. Residue serine 92 coordinates Mg(2+). Asparagine 111 provides a ligand contact to anthranilate. Position 166 (arginine 166) interacts with anthranilate. Positions 229 and 230 each coordinate Mg(2+).

It belongs to the anthranilate phosphoribosyltransferase family. In terms of assembly, homodimer. Requires Mg(2+) as cofactor.

The catalysed reaction is N-(5-phospho-beta-D-ribosyl)anthranilate + diphosphate = 5-phospho-alpha-D-ribose 1-diphosphate + anthranilate. Its pathway is amino-acid biosynthesis; L-tryptophan biosynthesis; L-tryptophan from chorismate: step 2/5. Functionally, catalyzes the transfer of the phosphoribosyl group of 5-phosphorylribose-1-pyrophosphate (PRPP) to anthranilate to yield N-(5'-phosphoribosyl)-anthranilate (PRA). This Chloroherpeton thalassium (strain ATCC 35110 / GB-78) protein is Anthranilate phosphoribosyltransferase.